The sequence spans 131 residues: CLAVATA3/ESR (CLE)-related protein ESR1 (131 aa).

The first 26 residues, 1–26 (MASRMGMVAIVSLFVCALAASTSVNA), serve as a signal peptide directing secretion. The tract at residues 49–131 (RQQQQGGFIG…IGPPPLSDRY (83 aa)) is disordered. Residues proline 81 and proline 84 each carry the hydroxyproline modification. Proline 84 is a glycosylation site (O-linked (Ara...) hydroxyproline).

Belongs to the CLV3/ESR signal peptide family. Post-translationally, the O-glycosylation (arabinosylation) of the hydroxyproline Pro-84 enhances binding affinity of the ESR1p peptide for its receptor. As to expression, seed endosperm.

It localises to the secreted. It is found in the extracellular space. Its function is as follows. Extracellular signal peptide that regulates cell fate. The polypeptide is CLAVATA3/ESR (CLE)-related protein ESR1 (Zea mays (Maize)).